The primary structure comprises 101 residues: DNA-binding protein TubR (101 aa).

In terms of assembly, homodimer. Dimers bind to DNA, forming a protein-bound filament which may form a helix around the TubZ filament.

A DNA-binding protein that is part of the type III plasmid partition system used to ensure correct segregation of the pBM400 plasmid. Binds the plasmid origin of replication, probably cooperatively, forming a ring or short helix with external DNA. Its effect on RNA expression has not been shown. This is DNA-binding protein TubR from Priestia megaterium (strain ATCC 12872 / QMB1551) (Bacillus megaterium).